The sequence spans 190 residues: NAD(P)H-quinone oxidoreductase subunit I (190 aa).

4Fe-4S ferredoxin-type domains are found at residues 55–84 (GRIH…VDWT) and 95–124 (KHYS…MTEE). 8 residues coordinate [4Fe-4S] cluster: cysteine 64, cysteine 67, cysteine 70, cysteine 74, cysteine 104, cysteine 107, cysteine 110, and cysteine 114. The disordered stretch occupies residues 169–190 (IEPHDLPAGSQRAGKRPEEITD).

Belongs to the complex I 23 kDa subunit family. NDH-1 is composed of at least 11 different subunits. It depends on [4Fe-4S] cluster as a cofactor.

The protein resides in the cellular thylakoid membrane. The enzyme catalyses a plastoquinone + NADH + (n+1) H(+)(in) = a plastoquinol + NAD(+) + n H(+)(out). It carries out the reaction a plastoquinone + NADPH + (n+1) H(+)(in) = a plastoquinol + NADP(+) + n H(+)(out). Its function is as follows. NDH-1 shuttles electrons from an unknown electron donor, via FMN and iron-sulfur (Fe-S) centers, to quinones in the respiratory and/or the photosynthetic chain. The immediate electron acceptor for the enzyme in this species is believed to be plastoquinone. Couples the redox reaction to proton translocation, and thus conserves the redox energy in a proton gradient. The polypeptide is NAD(P)H-quinone oxidoreductase subunit I (Microcystis aeruginosa (strain NIES-843 / IAM M-2473)).